A 291-amino-acid polypeptide reads, in one-letter code: Protease HtpX homolog (291 aa).

Helical transmembrane passes span 11 to 31 (INTF…GLLA) and 34 to 54 (FLGM…ACVQ). Histidine 140 provides a ligand contact to Zn(2+). Residue glutamate 141 is part of the active site. Position 144 (histidine 144) interacts with Zn(2+). Helical transmembrane passes span 155–175 (IVFG…RALI) and 186–206 (AFSF…AMLV). Glutamate 215 contacts Zn(2+).

Belongs to the peptidase M48B family. Zn(2+) is required as a cofactor.

It is found in the cell membrane. The polypeptide is Protease HtpX homolog (Tropheryma whipplei (strain Twist) (Whipple's bacillus)).